The sequence spans 420 residues: Glutamyl-tRNA reductase (420 aa).

Residues 49–52, Ser-107, 112–114, and Gln-118 contribute to the substrate site; these read TCNR and EPQ. Cys-50 acts as the Nucleophile in catalysis. 187 to 192 is an NADP(+) binding site; the sequence is GAGETI.

It belongs to the glutamyl-tRNA reductase family. In terms of assembly, homodimer.

The catalysed reaction is (S)-4-amino-5-oxopentanoate + tRNA(Glu) + NADP(+) = L-glutamyl-tRNA(Glu) + NADPH + H(+). Its pathway is porphyrin-containing compound metabolism; protoporphyrin-IX biosynthesis; 5-aminolevulinate from L-glutamyl-tRNA(Glu): step 1/2. Catalyzes the NADPH-dependent reduction of glutamyl-tRNA(Glu) to glutamate 1-semialdehyde (GSA). The sequence is that of Glutamyl-tRNA reductase from Methylococcus capsulatus (strain ATCC 33009 / NCIMB 11132 / Bath).